Here is a 234-residue protein sequence, read N- to C-terminus: 2,3-bisphosphoglycerate-dependent phosphoglycerate mutase 1 (234 aa).

Residues 14 to 21 (RHGQSIWN), 27 to 28 (TG), Arg66, and 93 to 96 (ERHY) contribute to the substrate site. His15 acts as the Tele-phosphohistidine intermediate in catalysis. Glu93 acts as the Proton donor/acceptor in catalysis.

The protein belongs to the phosphoglycerate mutase family. BPG-dependent PGAM subfamily. In terms of assembly, homodimer.

It catalyses the reaction (2R)-2-phosphoglycerate = (2R)-3-phosphoglycerate. It functions in the pathway carbohydrate degradation; glycolysis; pyruvate from D-glyceraldehyde 3-phosphate: step 3/5. Catalyzes the interconversion of 2-phosphoglycerate and 3-phosphoglycerate. This is 2,3-bisphosphoglycerate-dependent phosphoglycerate mutase 1 from Nitrosomonas europaea (strain ATCC 19718 / CIP 103999 / KCTC 2705 / NBRC 14298).